The sequence spans 119 residues: Anther-specific protein BCP1 (119 aa).

An N-terminal signal peptide occupies residues 1–23 (MGRQNVVVVFGLVFLAVLGLAAA). The segment covering 24 to 42 (ASSPSPSASPSKAPSTSTP) has biased composition (low complexity). Positions 24–95 (ASSPSPSASP…PSGSADSADS (72 aa)) are disordered. Topologically, residues 24 to 98 (ASSPSPSASP…SADSADSGAA (75 aa)) are extracellular. Residues 56-69 (TDDDAAASPGDDDV) show a composition bias toward acidic residues. Over residues 82-95 (GSNGPSGSADSADS) the composition is skewed to low complexity. A helical transmembrane segment spans residues 99-118 (ALGVSAVVVGVTSIVGSFLF). A topological domain (cytoplasmic) is located at residue Phe119.

In terms of tissue distribution, expressed in mature pollen grains, developing microspores and tapetal cells.

It is found in the membrane. Functionally, required for pollen fertility and development. Active in both diploid tapetum and haploid microspores. Major pollen protein. This is Anther-specific protein BCP1 (BCP1) from Brassica campestris (Field mustard).